The primary structure comprises 948 residues: Phosphoenolpyruvate carboxylase (948 aa).

Residues His-138 and Lys-610 contribute to the active site.

The protein belongs to the PEPCase type 1 family. It depends on Mg(2+) as a cofactor.

It catalyses the reaction oxaloacetate + phosphate = phosphoenolpyruvate + hydrogencarbonate. Its function is as follows. Forms oxaloacetate, a four-carbon dicarboxylic acid source for the tricarboxylic acid cycle. The chain is Phosphoenolpyruvate carboxylase from Streptococcus gordonii (strain Challis / ATCC 35105 / BCRC 15272 / CH1 / DL1 / V288).